A 234-amino-acid chain; its full sequence is Aspartate/glutamate leucyltransferase (234 aa).

It belongs to the R-transferase family. Bpt subfamily.

Its subcellular location is the cytoplasm. It carries out the reaction N-terminal L-glutamyl-[protein] + L-leucyl-tRNA(Leu) = N-terminal L-leucyl-L-glutamyl-[protein] + tRNA(Leu) + H(+). The catalysed reaction is N-terminal L-aspartyl-[protein] + L-leucyl-tRNA(Leu) = N-terminal L-leucyl-L-aspartyl-[protein] + tRNA(Leu) + H(+). Its function is as follows. Functions in the N-end rule pathway of protein degradation where it conjugates Leu from its aminoacyl-tRNA to the N-termini of proteins containing an N-terminal aspartate or glutamate. The protein is Aspartate/glutamate leucyltransferase of Hahella chejuensis (strain KCTC 2396).